We begin with the raw amino-acid sequence, 244 residues long: Securin-like protein (244 aa).

Positions 31–53 (ELEKTPSRGGLGLVVNSSKTPGG) are disordered.

As to quaternary structure, forms a complex (via C-terminus) with separase sep-1. Interaction with ify-1 stabilizes sep-1. Also maintains the complex in the cytoplasm during interphase and recruits it to chromosomes during the first meiotic division. Interacts with E3 ubiquitin-protein ligase etc-1. Post-translationally, ubiquitinated by etc-1 likely at the onset of anaphase, resulting in its degradation. In terms of tissue distribution, expressed in germ cells including oocytes.

It localises to the cytoplasm. It is found in the chromosome. The protein resides in the cytoskeleton. The protein localises to the spindle. Its function is as follows. Acts as a chaperone and as an inhibitor for separase sep-1. Plays an essential role in maintaining chromosome cohesion prior to meiotic and mitotic anaphase, in cytokinesis and in organizing the spindle and the centrosome. Ubiquitination-dependent degradation at the onset of anaphase is likely to activate sep-1 resulting in the proteolysis of the cohesin complex and the subsequent segregation of the chromosomes. Also required for cortical granule exocytosis. This chain is Securin-like protein, found in Caenorhabditis elegans.